The sequence spans 209 residues: NADH-quinone oxidoreductase subunit C (209 aa).

It belongs to the complex I 30 kDa subunit family. As to quaternary structure, NDH-1 is composed of 14 different subunits. Subunits NuoB, C, D, E, F, and G constitute the peripheral sector of the complex.

It is found in the cell inner membrane. The catalysed reaction is a quinone + NADH + 5 H(+)(in) = a quinol + NAD(+) + 4 H(+)(out). Its function is as follows. NDH-1 shuttles electrons from NADH, via FMN and iron-sulfur (Fe-S) centers, to quinones in the respiratory chain. The immediate electron acceptor for the enzyme in this species is believed to be ubiquinone. Couples the redox reaction to proton translocation (for every two electrons transferred, four hydrogen ions are translocated across the cytoplasmic membrane), and thus conserves the redox energy in a proton gradient. This is NADH-quinone oxidoreductase subunit C from Bordetella petrii (strain ATCC BAA-461 / DSM 12804 / CCUG 43448).